The following is a 166-amino-acid chain: Crossover junction endodeoxyribonuclease RuvC (166 aa).

Catalysis depends on residues Asp-7, Glu-70, and His-143. The Mg(2+) site is built by Asp-7, Glu-70, and His-143.

The protein belongs to the RuvC family. Homodimer which binds Holliday junction (HJ) DNA. The HJ becomes 2-fold symmetrical on binding to RuvC with unstacked arms; it has a different conformation from HJ DNA in complex with RuvA. In the full resolvosome a probable DNA-RuvA(4)-RuvB(12)-RuvC(2) complex forms which resolves the HJ. It depends on Mg(2+) as a cofactor.

The protein localises to the cytoplasm. It catalyses the reaction Endonucleolytic cleavage at a junction such as a reciprocal single-stranded crossover between two homologous DNA duplexes (Holliday junction).. The RuvA-RuvB-RuvC complex processes Holliday junction (HJ) DNA during genetic recombination and DNA repair. Endonuclease that resolves HJ intermediates. Cleaves cruciform DNA by making single-stranded nicks across the HJ at symmetrical positions within the homologous arms, yielding a 5'-phosphate and a 3'-hydroxyl group; requires a central core of homology in the junction. The consensus cleavage sequence is 5'-(A/T)TT(C/G)-3'. Cleavage occurs on the 3'-side of the TT dinucleotide at the point of strand exchange. HJ branch migration catalyzed by RuvA-RuvB allows RuvC to scan DNA until it finds its consensus sequence, where it cleaves and resolves the cruciform DNA. This is Crossover junction endodeoxyribonuclease RuvC from Thermus thermophilus (strain ATCC BAA-163 / DSM 7039 / HB27).